We begin with the raw amino-acid sequence, 155 residues long: MQIKQIEGSLSAKGARFALVVSRFNDFIGQKLVEGALDCLRRHGAEDSEVVIYRCPGAFELPMVAKKAALSGNHDAVIALGVIIRGSTPHFDVIAAEATKGLAQVALDTMIPVAFGVLTTENLEQAIERAGTKAGNKGFDAAMTVIEMVNLYRQF.

5-amino-6-(D-ribitylamino)uracil is bound by residues phenylalanine 24, 58–60, and 82–84; these read AFE and VII. Residue 87–88 participates in (2S)-2-hydroxy-3-oxobutyl phosphate binding; the sequence is ST. Histidine 90 (proton donor) is an active-site residue. Phenylalanine 115 is a 5-amino-6-(D-ribitylamino)uracil binding site. Position 129 (arginine 129) interacts with (2S)-2-hydroxy-3-oxobutyl phosphate.

It belongs to the DMRL synthase family.

It catalyses the reaction (2S)-2-hydroxy-3-oxobutyl phosphate + 5-amino-6-(D-ribitylamino)uracil = 6,7-dimethyl-8-(1-D-ribityl)lumazine + phosphate + 2 H2O + H(+). It participates in cofactor biosynthesis; riboflavin biosynthesis; riboflavin from 2-hydroxy-3-oxobutyl phosphate and 5-amino-6-(D-ribitylamino)uracil: step 1/2. Functionally, catalyzes the formation of 6,7-dimethyl-8-ribityllumazine by condensation of 5-amino-6-(D-ribitylamino)uracil with 3,4-dihydroxy-2-butanone 4-phosphate. This is the penultimate step in the biosynthesis of riboflavin. The chain is 6,7-dimethyl-8-ribityllumazine synthase from Chlorobium phaeobacteroides (strain DSM 266 / SMG 266 / 2430).